We begin with the raw amino-acid sequence, 342 residues long: Protein RecA (342 aa).

The protein belongs to the RecA family.

The protein localises to the cytoplasm. Its function is as follows. Can catalyze the hydrolysis of ATP in the presence of single-stranded DNA, the ATP-dependent uptake of single-stranded DNA by duplex DNA, and the ATP-dependent hybridization of homologous single-stranded DNAs. It interacts with LexA causing its activation and leading to its autocatalytic cleavage. The polypeptide is Protein RecA (Pectobacterium carotovorum (Erwinia carotovora)).